Here is a 663-residue protein sequence, read N- to C-terminus: Alcohol oxidase (663 aa).

8–39 provides a ligand contact to FAD; it reads DVIVCGGGSTGCVIAGRLANVDENLKVLLIEN. His-567 serves as the catalytic Proton acceptor. Residues 661-663 carry the Microbody targeting signal motif; it reads ARY.

The protein belongs to the GMC oxidoreductase family. Homooctamer. FAD is required as a cofactor.

The protein resides in the peroxisome matrix. The catalysed reaction is a primary alcohol + O2 = an aldehyde + H2O2. The protein operates within energy metabolism; methane degradation. Functionally, catalyzes the oxidation of methanol to formaldehyde and hydrogen peroxide, the first step in the methanol utilization pathway of methylotrophic yeasts. This chain is Alcohol oxidase (AOD1), found in Candida boidinii (Yeast).